Reading from the N-terminus, the 320-residue chain is Probable cell division protein WhiA (320 aa).

Residues threonine 276–alanine 310 constitute a DNA-binding region (H-T-H motif).

This sequence belongs to the WhiA family.

In terms of biological role, involved in cell division and chromosome segregation. The protein is Probable cell division protein WhiA of Halalkalibacterium halodurans (strain ATCC BAA-125 / DSM 18197 / FERM 7344 / JCM 9153 / C-125) (Bacillus halodurans).